Reading from the N-terminus, the 131-residue chain is Holo-[acyl-carrier-protein] synthase (131 aa).

The Mg(2+) site is built by aspartate 8 and glutamate 59.

This sequence belongs to the P-Pant transferase superfamily. AcpS family. It depends on Mg(2+) as a cofactor.

The protein localises to the cytoplasm. It carries out the reaction apo-[ACP] + CoA = holo-[ACP] + adenosine 3',5'-bisphosphate + H(+). Functionally, transfers the 4'-phosphopantetheine moiety from coenzyme A to a Ser of acyl-carrier-protein. The protein is Holo-[acyl-carrier-protein] synthase of Orientia tsutsugamushi (strain Ikeda) (Rickettsia tsutsugamushi).